The primary structure comprises 543 residues: CTP synthase (543 aa).

The amidoligase domain stretch occupies residues 1–265; the sequence is MTRYIFVTGG…DDFVVERFGL (265 aa). Ser13 lines the CTP pocket. Residue Ser13 participates in UTP binding. ATP contacts are provided by residues 14–19 and Asp71; that span reads SLGKGI. Residues Asp71 and Glu139 each coordinate Mg(2+). CTP-binding positions include 146 to 148, 186 to 191, and Lys222; these read DIE and KTKPTQ. Residues 186-191 and Lys222 contribute to the UTP site; that span reads KTKPTQ. Residues 290–541 enclose the Glutamine amidotransferase type-1 domain; that stretch reads TIAMVGKYME…VKAALAQHQK (252 aa). L-glutamine is bound at residue Gly351. The active-site Nucleophile; for glutamine hydrolysis is Cys378. Residues 379–382, Glu402, and Arg469 each bind L-glutamine; that span reads LGMQ. Active-site residues include His514 and Glu516.

It belongs to the CTP synthase family. As to quaternary structure, homotetramer.

The enzyme catalyses UTP + L-glutamine + ATP + H2O = CTP + L-glutamate + ADP + phosphate + 2 H(+). It catalyses the reaction L-glutamine + H2O = L-glutamate + NH4(+). It carries out the reaction UTP + NH4(+) + ATP = CTP + ADP + phosphate + 2 H(+). Its pathway is pyrimidine metabolism; CTP biosynthesis via de novo pathway; CTP from UDP: step 2/2. Allosterically activated by GTP, when glutamine is the substrate; GTP has no effect on the reaction when ammonia is the substrate. The allosteric effector GTP functions by stabilizing the protein conformation that binds the tetrahedral intermediate(s) formed during glutamine hydrolysis. Inhibited by the product CTP, via allosteric rather than competitive inhibition. Its function is as follows. Catalyzes the ATP-dependent amination of UTP to CTP with either L-glutamine or ammonia as the source of nitrogen. Regulates intracellular CTP levels through interactions with the four ribonucleotide triphosphates. In Pseudomonas savastanoi pv. phaseolicola (strain 1448A / Race 6) (Pseudomonas syringae pv. phaseolicola (strain 1448A / Race 6)), this protein is CTP synthase.